A 95-amino-acid polypeptide reads, in one-letter code: Aspartyl/glutamyl-tRNA(Asn/Gln) amidotransferase subunit C (95 aa).

It belongs to the GatC family. As to quaternary structure, heterotrimer of A, B and C subunits.

It catalyses the reaction L-glutamyl-tRNA(Gln) + L-glutamine + ATP + H2O = L-glutaminyl-tRNA(Gln) + L-glutamate + ADP + phosphate + H(+). The catalysed reaction is L-aspartyl-tRNA(Asn) + L-glutamine + ATP + H2O = L-asparaginyl-tRNA(Asn) + L-glutamate + ADP + phosphate + 2 H(+). Allows the formation of correctly charged Asn-tRNA(Asn) or Gln-tRNA(Gln) through the transamidation of misacylated Asp-tRNA(Asn) or Glu-tRNA(Gln) in organisms which lack either or both of asparaginyl-tRNA or glutaminyl-tRNA synthetases. The reaction takes place in the presence of glutamine and ATP through an activated phospho-Asp-tRNA(Asn) or phospho-Glu-tRNA(Gln). This is Aspartyl/glutamyl-tRNA(Asn/Gln) amidotransferase subunit C from Chlorobium phaeobacteroides (strain BS1).